The chain runs to 170 residues: Protein-export protein SecB (170 aa).

This sequence belongs to the SecB family. In terms of assembly, homotetramer, a dimer of dimers. One homotetramer interacts with 1 SecA dimer.

It localises to the cytoplasm. In terms of biological role, one of the proteins required for the normal export of preproteins out of the cell cytoplasm. It is a molecular chaperone that binds to a subset of precursor proteins, maintaining them in a translocation-competent state. It also specifically binds to its receptor SecA. This chain is Protein-export protein SecB, found in Xanthomonas axonopodis pv. citri (strain 306).